The following is a 412-amino-acid chain: Divalent metal cation transporter MntH (412 aa).

At 1-19 (MTNYRVESSSGRAARKMRL) the chain is on the cytoplasmic side. A helical transmembrane segment spans residues 20-39 (ALMGPAFIAAIGYIDPGNFA). The Periplasmic portion of the chain corresponds to 40 to 51 (TNIQAGASFGYQ). A helical transmembrane segment spans residues 52 to 71 (LLWVVVWANLMAMLIQILSA). The Cytoplasmic portion of the chain corresponds to 72-95 (KLGIATGKNLAEQIRDHYPRPVVW). Residues 96–118 (FYWVQAEIIAMATDLAEFIGAAI) traverse the membrane as a helical segment. The Periplasmic segment spans residues 119–125 (GFKLILG). Residues 126 to 145 (VSLLQGAVLTGIATFLILML) traverse the membrane as a helical segment. Topologically, residues 146 to 155 (QRRGQKPLEK) are cytoplasmic. A helical transmembrane segment spans residues 156 to 175 (VIGGLLLFVAAAYIVELIFS). Residues 176-196 (QPNLAQLGKGMVIPSLPTSEA) are Periplasmic-facing. The chain crosses the membrane as a helical span at residues 197–220 (VFLAAGVLGATIMPHVIYLHSSLT). Residues 221-238 (QHLHGGSRQQRYSATKWD) lie on the Cytoplasmic side of the membrane. The chain crosses the membrane as a helical span at residues 239–258 (VAIAMTIAGFVNLVMMATAA). Over 259 to 276 (AAFHFSGHTGVADLDEAY) the chain is Periplasmic. The chain crosses the membrane as a helical span at residues 277-297 (LTLQPLLSHAAATVFGLSLVA). Over 298–327 (AGLSSTVVGTLAGQVVMQGFIRFHIPLWVR) the chain is Cytoplasmic. Residues 328–344 (RTVTMLPSFIVILMGLD) traverse the membrane as a helical segment. At 345–350 (PTRILV) the chain is on the periplasmic side. Residues 351–370 (MSQVLLSFGIALALVPLLIF) form a helical membrane-spanning segment. Over 371-387 (TSDSKLMGDLVNSKRVK) the chain is Cytoplasmic. Residues 388-406 (QTGWVIVVLVVALNIWLLV) form a helical membrane-spanning segment. At 407–412 (GTALGL) the chain is on the periplasmic side.

Belongs to the NRAMP family.

It localises to the cell inner membrane. Its function is as follows. H(+)-stimulated, divalent metal cation uptake system. This is Divalent metal cation transporter MntH from Shigella flexneri serotype 5b (strain 8401).